Here is a 162-residue protein sequence, read N- to C-terminus: MPTQPQEKRSFLQFLKSFVGIVRVLQILLGAGLWVTIAANKYEGSIHFVLFVAVLFWLLTLAIFILTLLDKQDLVPIVGGERWLLSNLIHDVVATLLYLSTIGIMIYKTQKNSYCNLDVYKHHCLYKVYLTASVFACLTAAVYLLSGIYCSCRKCRGERTVV.

At 1–17 the chain is on the cytoplasmic side; it reads MPTQPQEKRSFLQFLKS. Residues 14 to 155 enclose the MARVEL domain; that stretch reads FLKSFVGIVR…SGIYCSCRKC (142 aa). A helical membrane pass occupies residues 18-38; the sequence is FVGIVRVLQILLGAGLWVTIA. The Extracellular portion of the chain corresponds to 39–47; that stretch reads ANKYEGSIH. A helical transmembrane segment spans residues 48–68; the sequence is FVLFVAVLFWLLTLAIFILTL. Topologically, residues 69–86 are cytoplasmic; that stretch reads LDKQDLVPIVGGERWLLS. Residues 87–107 traverse the membrane as a helical segment; sequence NLIHDVVATLLYLSTIGIMIY. Residues 108–127 lie on the Extracellular side of the membrane; the sequence is KTQKNSYCNLDVYKHHCLYK. The helical transmembrane segment at 128 to 148 threads the bilayer; that stretch reads VYLTASVFACLTAAVYLLSGI. At 149 to 162 the chain is on the cytoplasmic side; that stretch reads YCSCRKCRGERTVV.

The protein resides in the membrane. Its subcellular location is the nucleus. This is MARVEL domain-containing protein 1 (marveld1) from Danio rerio (Zebrafish).